We begin with the raw amino-acid sequence, 598 residues long: Major royal jelly protein 5 (598 aa).

The signal sequence occupies residues 1 to 17; it reads MTTWLLLVVCLGIACQG. 4 N-linked (GlcNAc...) asparagine glycosylation sites follow: N148, N164, N181, and N324.

This sequence belongs to the major royal jelly protein family. As to expression, found in and secreted from the hypopharyngeal glands of the worker honey bee (at protein level); expression peaks at 8 days post eclosion. Expressed in the brains of adult worker bees peaking at 12 days post eclosion (at protein level). Expressed in the spermatheca of adult queen bees (at protein level); Expression levels are higher in mated queens than in virgin queens. Expressed in the heads of worker bees after eclosion, expression dropping with age and detectable up to 26 days of age.

Its subcellular location is the secreted. Component of royal jelly, a substance produced in the hypopharyngeal gland containing proteins, free amino acids, fatty acids, sugars and other nutrients, which is fed to developing larvae by worker nurse bees. Major royal jelly proteins (MRJPs) are high in essential amino acids and probably have a nutritional function in larval food. All larvae are fed some royal jelly (also known as worker jelly) early in their development but it forms the principal source of nutrition for larvae destined to become queen bees. Produced in the spermatheca of adult queen bees, along with other major royal jelly proteins, where it may act as a nutrient supply for sperm stored by mated queens, or be involved in energy metabolism. This is Major royal jelly protein 5 from Apis mellifera (Honeybee).